Reading from the N-terminus, the 242-residue chain is MCWNYQVSLIFSVIYVVTNSYYVVKRPLYWKQYLLFGSFYLTMEVFQTLQWLFGNVYSDSMYGQSVCNSINVNYTIVAFILIWLQPILFSVIGYQTTTTNKWFFRVLTVLNCFVFFYGLKLLYGGFEKPDYYTISDSMFGSSTCTNEGETGHLVWRFKPKTLDVFPNHLTYIILCIISFVMYENNATRVIGLGWLLSLIVTKLLLAPTLVEIASSWCLLSIIANLLIVAYVHISTGIYLTGQ.

The next 2 membrane-spanning stretches (helical) occupy residues 4–24 (NYQV…YYVV) and 34–54 (LLFG…WLFG). Asparagine 73 is a glycosylation site (N-linked (GlcNAc...) asparagine; by host). 3 consecutive transmembrane segments (helical) span residues 74-94 (YTIV…VIGY), 106-126 (VLTV…YGGF), and 162-182 (LDVF…FVMY). Asparagine 185 carries an N-linked (GlcNAc...) asparagine; by host glycan. A run of 2 helical transmembrane segments spans residues 189–209 (VIGL…APTL) and 217–237 (CLLS…STGI).

It is found in the membrane. This is an uncharacterized protein from Acanthamoeba polyphaga mimivirus (APMV).